A 181-amino-acid polypeptide reads, in one-letter code: Large ribosomal subunit protein uL10 (181 aa).

The protein belongs to the universal ribosomal protein uL10 family. Part of the ribosomal stalk of the 50S ribosomal subunit. The N-terminus interacts with L11 and the large rRNA to form the base of the stalk. The C-terminus forms an elongated spine to which L12 dimers bind in a sequential fashion forming a multimeric L10(L12)X complex.

In terms of biological role, forms part of the ribosomal stalk, playing a central role in the interaction of the ribosome with GTP-bound translation factors. The protein is Large ribosomal subunit protein uL10 of Trichormus variabilis (strain ATCC 29413 / PCC 7937) (Anabaena variabilis).